The following is a 127-amino-acid chain: Small ribosomal subunit protein bS6 (127 aa).

This sequence belongs to the bacterial ribosomal protein bS6 family.

Functionally, binds together with bS18 to 16S ribosomal RNA. This Sulfurovum sp. (strain NBC37-1) protein is Small ribosomal subunit protein bS6.